The primary structure comprises 119 residues: MKKINKQALIDAVEQKQLKEYVPEFGAGDEVNVAIKLREKEKVRVQNFTGTVLRRRGRGISETFMVRKTTDGIPIEKNFQIHNPNIDIEVKRRGKVRRAYISYMRERSGKSAKIKEKKS.

Belongs to the bacterial ribosomal protein bL19 family.

Functionally, this protein is located at the 30S-50S ribosomal subunit interface and may play a role in the structure and function of the aminoacyl-tRNA binding site. This is Large ribosomal subunit protein bL19 (rplS) from Mycoplasma genitalium (strain ATCC 33530 / DSM 19775 / NCTC 10195 / G37) (Mycoplasmoides genitalium).